The chain runs to 427 residues: ATP-dependent RNA helicase DDX39A (427 aa).

The segment covering 1-19 (MAEQDVENELLDYDEDEEP) has biased composition (acidic residues). The disordered stretch occupies residues 1 to 36 (MAEQDVENELLDYDEDEEPQAPQESTPAPPKKDVKG). A2 carries the N-acetylalanine modification. K31 participates in a covalent cross-link: Glycyl lysine isopeptide (Lys-Gly) (interchain with G-Cter in SUMO2). K35 carries the N6-acetyllysine; alternate modification. Residue K35 forms a Glycyl lysine isopeptide (Lys-Gly) (interchain with G-Cter in SUMO2); alternate linkage. The residue at position 37 (S37) is a Phosphoserine. Positions 44-72 (SGFRDFLLKPELLRAIVDCGFEHPSEVQH) match the Q motif motif. The Helicase ATP-binding domain maps to 75-248 (IPQAILGMDV…RKFMQDPMEV (174 aa)). ATP is bound at residue 88-95 (AKSGMGKT). Glycyl lysine isopeptide (Lys-Gly) (interchain with G-Cter in SUMO2) cross-links involve residues K154 and K162. The residue at position 171 (T171) is a Phosphothreonine. Residues 195 to 198 (DECD) carry the DECD box motif. Residues K240 and K255 each participate in a glycyl lysine isopeptide (Lys-Gly) (interchain with G-Cter in SUMO2) cross-link. The region spanning 260–421 (GLQQYYVKLK…ELPEEIDIST (162 aa)) is the Helicase C-terminal domain. S426 bears the Phosphoserine mark.

It belongs to the DEAD box helicase family. DECD subfamily. Binds ALYREF/THOC4 and DDX39B/BAT1. Interacts with the apo-AREX complex component SARNP. Interacts with MX1. Interacts with MCM3AP isoform GANP. Interacts with ECD. Interacts with PHAX; this interaction stimulates PHAX RNA binding activity. Post-translationally, SUMOylated by RANBP2; SUMOylation modification affects its ability to bind RNA.

Its subcellular location is the nucleus. It localises to the cytoplasm. The enzyme catalyses ATP + H2O = ADP + phosphate + H(+). In terms of biological role, helicase that plays an essential role in mRNA export and is involved in multiple steps in RNA metabolism including alternative splicing. Regulates nuclear mRNA export to the cytoplasm through association with ECD. Also involved in spliceosomal uridine-rich small nuclear RNA (U snRNA) export by stimulating the RNA binding of adapter PHAX. Plays a role in the negative regulation of type I IFN production by increasing the nuclear retention of antiviral transcripts and thus reducing their protein expression. Independently of the interferon pathway, plays an antiviral role against alphaviruses by binding to a 5' conserved sequence element in the viral genomic RNA. This is ATP-dependent RNA helicase DDX39A from Mus musculus (Mouse).